The following is a 189-amino-acid chain: Small ribosomal subunit protein uS7 (189 aa).

This sequence belongs to the universal ribosomal protein uS7 family. As to quaternary structure, part of the 30S ribosomal subunit.

Its function is as follows. One of the primary rRNA binding proteins, it binds directly to 16S rRNA where it nucleates assembly of the head domain of the 30S subunit. Is located at the subunit interface close to the decoding center. The protein is Small ribosomal subunit protein uS7 of Methanosarcina mazei (strain ATCC BAA-159 / DSM 3647 / Goe1 / Go1 / JCM 11833 / OCM 88) (Methanosarcina frisia).